The sequence spans 321 residues: Glycerol-3-phosphate phosphatase (321 aa).

Catalysis depends on Asp-34, which acts as the Nucleophile. Asp-34, Asp-36, and Asp-260 together coordinate Mg(2+). Asp-36 (proton donor) is an active-site residue.

The protein belongs to the HAD-like hydrolase superfamily. CbbY/CbbZ/Gph/YieH family. Homodimer. Requires Mg(2+) as cofactor. Detected in all tissues including red cells, lymphocytes and cultured fibroblasts (at protein level). The highest activities occur in skeletal muscle and cardiac muscle.

The catalysed reaction is O-phospho-L-tyrosyl-[protein] + H2O = L-tyrosyl-[protein] + phosphate. It catalyses the reaction sn-glycerol 1-phosphate + H2O = glycerol + phosphate. It carries out the reaction sn-glycerol 3-phosphate + H2O = glycerol + phosphate. In terms of biological role, glycerol-3-phosphate phosphatase hydrolyzing glycerol-3-phosphate into glycerol. Thereby, regulates the cellular levels of glycerol-3-phosphate a metabolic intermediate of glucose, lipid and energy metabolism. Was also shown to have a 2-phosphoglycolate phosphatase activity and a tyrosine-protein phosphatase activity. However, their physiological relevance is unclear. In vitro, also has a phosphatase activity toward ADP, ATP, GDP and GTP. This Homo sapiens (Human) protein is Glycerol-3-phosphate phosphatase.